The sequence spans 399 residues: 26S proteasome regulatory subunit 10B homolog A (399 aa).

Thr2 carries the post-translational modification N-acetylthreonine. ATP is bound at residue Gly180–Thr187. A Glycyl lysine isopeptide (Lys-Gly) (interchain with G-Cter in ubiquitin) cross-link involves residue Lys203.

This sequence belongs to the AAA ATPase family. In terms of assembly, component of the 19S regulatory particle (RP/PA700) base subcomplex of the 26S proteasome. The 26S proteasome is composed of a core protease (CP), known as the 20S proteasome, capped at one or both ends by the 19S regulatory particle (RP/PA700). The RP/PA700 complex is composed of at least 17 different subunits in two subcomplexes, the base and the lid, which form the portions proximal and distal to the 20S proteolytic core, respectively.

It is found in the cytoplasm. The protein localises to the nucleus. The 26S proteasome is involved in the ATP-dependent degradation of ubiquitinated proteins. The regulatory (or ATPase) complex confers ATP dependency and substrate specificity to the 26S complex. The chain is 26S proteasome regulatory subunit 10B homolog A (RPT4A) from Arabidopsis thaliana (Mouse-ear cress).